Reading from the N-terminus, the 133-residue chain is L-ectoine synthase (133 aa).

Belongs to the ectoine synthase family.

The enzyme catalyses (2S)-4-acetamido-2-aminobutanoate = L-ectoine + H2O. Its pathway is amine and polyamine biosynthesis; ectoine biosynthesis; L-ectoine from L-aspartate 4-semialdehyde: step 3/3. In terms of biological role, catalyzes the circularization of gamma-N-acetyl-alpha,gamma-diaminobutyric acid (ADABA) to ectoine (1,4,5,6-tetrahydro-2-methyl-4-pyrimidine carboxylic acid), which is an excellent osmoprotectant. This Bordetella petrii (strain ATCC BAA-461 / DSM 12804 / CCUG 43448) protein is L-ectoine synthase.